A 117-amino-acid polypeptide reads, in one-letter code: Elafin (117 aa).

Positions 1-22 are cleaved as a signal peptide; that stretch reads MRASSFLIVVVFLIAGTLVLEA. A propeptide spanning residues 23–60 is cleaved from the precursor; sequence AVTGVPVKGQDTVKGRVPFNGQDPVKGQVSVKGQDKVK. SVP-1 clotting repeat units lie at residues 29 to 54 and 55 to 72; these read VKGQ…VSVK and GQDK…VSTK. The 2 X tandem repeats of SVP-1 like motif stretch occupies residues 29 to 72; the sequence is VKGQDTVKGRVPFNGQDPVKGQVSVKGQDKVKAQEPVKGPVSTK. Positions 69–117 constitute a WAP domain; sequence VSTKPGSCPIILIRCAMLNPPNRCLKDTDCPGIKKCCEGSCGMACFVPQ. 4 cysteine pairs are disulfide-bonded: C76-C105, C83-C109, C92-C104, and C98-C113.

It is found in the secreted. In terms of biological role, neutrophil and pancreatic elastase-specific inhibitor of skin. It may prevent elastase-mediated tissue proteolysis. Has been shown to inhibit the alpha-4-beta-2/CHRNA2-CHRNB2 nicotinic acetylcholine receptor and to produce a weak inhibition on Kv11.1/KCNH2/ERG1 and on the transient receptor potential cation channel subfamily V member 1 (TRPV1). In Homo sapiens (Human), this protein is Elafin (PI3).